A 392-amino-acid chain; its full sequence is Formate-dependent phosphoribosylglycinamide formyltransferase (392 aa).

N(1)-(5-phospho-beta-D-ribosyl)glycinamide contacts are provided by residues 22 to 23 (EL) and E82. Residues R114, K155, 160-165 (SSGHGQ), 195-198 (EGFI), and E203 each bind ATP. The 189-residue stretch at 119 to 307 (RLAAEELGLK…QFALHARAIL (189 aa)) folds into the ATP-grasp domain. 2 residues coordinate Mg(2+): E266 and E278. Residues D285, K355, and 362–363 (RR) contribute to the N(1)-(5-phospho-beta-D-ribosyl)glycinamide site.

Belongs to the PurK/PurT family. Homodimer.

The protein localises to the cell inner membrane. The catalysed reaction is N(1)-(5-phospho-beta-D-ribosyl)glycinamide + formate + ATP = N(2)-formyl-N(1)-(5-phospho-beta-D-ribosyl)glycinamide + ADP + phosphate + H(+). It functions in the pathway purine metabolism; IMP biosynthesis via de novo pathway; N(2)-formyl-N(1)-(5-phospho-D-ribosyl)glycinamide from N(1)-(5-phospho-D-ribosyl)glycinamide (formate route): step 1/1. Involved in the de novo purine biosynthesis. Catalyzes the transfer of formate to 5-phospho-ribosyl-glycinamide (GAR), producing 5-phospho-ribosyl-N-formylglycinamide (FGAR). Formate is provided by PurU via hydrolysis of 10-formyl-tetrahydrofolate. This chain is Formate-dependent phosphoribosylglycinamide formyltransferase, found in Mannheimia haemolytica (Pasteurella haemolytica).